We begin with the raw amino-acid sequence, 129 residues long: uncharacterized protein (129 aa).

Residues 46-66 (FFHFFFSFLLHLISPAVTGGI) form a helical membrane-spanning segment.

It is found in the membrane. This is an uncharacterized protein from Saccharomyces cerevisiae (strain ATCC 204508 / S288c) (Baker's yeast).